An 84-amino-acid chain; its full sequence is Three-finger toxin 3FTx-1 (84 aa).

The signal sequence occupies residues 1–21 (MKTLLLTLVVVTIVCLDLGNS). Cystine bridges form between Cys24/Cys41, Cys34/Cys59, Cys63/Cys71, and Cys72/Cys77. N-linked (GlcNAc...) asparagine glycosylation occurs at Asn78.

Belongs to the three-finger toxin family. Short-chain subfamily. In terms of tissue distribution, expressed by the venom gland.

The protein resides in the secreted. The protein is Three-finger toxin 3FTx-1 of Micrurus corallinus (Brazilian coral snake).